Consider the following 80-residue polypeptide: Defensin-like protein 13 (80 aa).

Positions 1 to 29 (MAKSATIVTLFFAALVFFAALEAPMVVEA) are cleaved as a signal peptide. Q30 carries the post-translational modification Pyrrolidone carboxylic acid. 4 disulfides stabilise this stretch: C33–C80, C44–C65, C50–C74, and C54–C76.

This sequence belongs to the DEFL family. As to quaternary structure, forms oligomers in its native state. As to expression, expressed predominantly in siliques and dry seeds.

It localises to the secreted. Its function is as follows. Confers broad-spectrum resistance to pathogens. Possesses antifungal activity sensitive to inorganic cations in vitro. In Arabidopsis thaliana (Mouse-ear cress), this protein is Defensin-like protein 13 (PDF1.1).